Consider the following 151-residue polypeptide: Large-conductance mechanosensitive channel (151 aa).

Helical transmembrane passes span 14-34 (VVDM…VNTL), 38-58 (VLMP…LYLI), and 86-106 (GLFL…FLLV).

It belongs to the MscL family. In terms of assembly, homopentamer.

It localises to the cell inner membrane. Channel that opens in response to stretch forces in the membrane lipid bilayer. May participate in the regulation of osmotic pressure changes within the cell. This chain is Large-conductance mechanosensitive channel, found in Pelodictyon phaeoclathratiforme (strain DSM 5477 / BU-1).